The primary structure comprises 396 residues: Putative cyclin-B3-1 (396 aa).

Positions 1 to 98 (MLRDGNKQSK…KVLDVTAKPK (98 aa)) are disordered. The segment covering 21–32 (KTTVKTSLQNRS) has biased composition (polar residues). The segment covering 39-57 (VGRSKSRSISSIPSSAVAS) has biased composition (low complexity). The span at 76–85 (GESSSSGNKD) shows a compositional bias: polar residues.

It belongs to the cyclin family. Cyclin AB subfamily.

The protein is Putative cyclin-B3-1 (CYCB3-1) of Arabidopsis thaliana (Mouse-ear cress).